Consider the following 260-residue polypeptide: tRNA pseudouridine synthase A (260 aa).

Asp60 (nucleophile) is an active-site residue. Tyr118 is a substrate binding site.

This sequence belongs to the tRNA pseudouridine synthase TruA family. In terms of assembly, homodimer.

It carries out the reaction uridine(38/39/40) in tRNA = pseudouridine(38/39/40) in tRNA. In terms of biological role, formation of pseudouridine at positions 38, 39 and 40 in the anticodon stem and loop of transfer RNAs. This is tRNA pseudouridine synthase A from Leuconostoc citreum (strain KM20).